The sequence spans 370 residues: DNA replication and repair protein RecF (370 aa).

30-37 (GENAQGKT) contributes to the ATP binding site.

Belongs to the RecF family.

Its subcellular location is the cytoplasm. Functionally, the RecF protein is involved in DNA metabolism; it is required for DNA replication and normal SOS inducibility. RecF binds preferentially to single-stranded, linear DNA. It also seems to bind ATP. The chain is DNA replication and repair protein RecF from Staphylococcus carnosus (strain TM300).